Consider the following 179-residue polypeptide: MKVPEDLVLVGYISGAYGLNGWVRVRPYSADADALLTAKTWWLDKPEFHDVEMMQSKIHTGDVVAKLMGVAGRDAAEALKGATVQIPRSHFPALSDNEFYWVDLIGLEVENLQGEHLGQVSDMMDNGAHPILRVAVPQAAETTDPKAAPQELLIPFVEQFVITVDRTAKKITVDWGLDY.

The 84-residue stretch at 96–179 folds into the PRC barrel domain; the sequence is DNEFYWVDLI…KITVDWGLDY (84 aa).

This sequence belongs to the RimM family. As to quaternary structure, binds ribosomal protein uS19.

Its subcellular location is the cytoplasm. In terms of biological role, an accessory protein needed during the final step in the assembly of 30S ribosomal subunit, possibly for assembly of the head region. Essential for efficient processing of 16S rRNA. May be needed both before and after RbfA during the maturation of 16S rRNA. It has affinity for free ribosomal 30S subunits but not for 70S ribosomes. In Janthinobacterium sp. (strain Marseille) (Minibacterium massiliensis), this protein is Ribosome maturation factor RimM.